The following is a 211-amino-acid chain: V-type ATP synthase subunit D (211 aa).

This sequence belongs to the V-ATPase D subunit family.

Produces ATP from ADP in the presence of a proton gradient across the membrane. This chain is V-type ATP synthase subunit D, found in Enterococcus faecalis (strain ATCC 700802 / V583).